Consider the following 248-residue polypeptide: ATP synthase subunit a, chloroplastic (248 aa).

The next 5 helical transmembrane spans lie at 38-58 (QVLI…TIVV), 96-116 (VPFI…GALL), 135-155 (INTT…AGIS), 200-220 (LVVV…VMFL), and 221-241 (GLFT…AYIG).

Belongs to the ATPase A chain family. F-type ATPases have 2 components, CF(1) - the catalytic core - and CF(0) - the membrane proton channel. CF(1) has five subunits: alpha(3), beta(3), gamma(1), delta(1), epsilon(1). CF(0) has four main subunits: a, b, b' and c.

The protein localises to the plastid. It is found in the chloroplast thylakoid membrane. Key component of the proton channel; it plays a direct role in the translocation of protons across the membrane. The polypeptide is ATP synthase subunit a, chloroplastic (Amborella trichopoda).